A 477-amino-acid polypeptide reads, in one-letter code: Ankyrin repeat, SAM and basic leucine zipper domain-containing protein 1 (477 aa).

A phosphoserine mark is found at Ser-17, Ser-18, and Ser-20. 6 ANK repeats span residues 46–76 (EKKEKFKKALTTGDVSLVLELLDSGIISVDA), 80–109 (YGWTPLMYAASVANAELVRVLLDRGANASF), 112–146 (DKQTILITACSAHGSEEQILKCVELLLSRNADPNV), 150–179 (RLMTPIMYAARDGHTQVVALLVASGAEVNT), 183–212 (NGYTALTWAARQGHKSIVLKLLELGANKML), and 216–245 (DGKLPSEIAKRNKHHEIFNLLTFTLNPLEG). In terms of domain architecture, SAM spans 274 to 336 (SYAAFGDLEV…KILAALKELE (63 aa)).

In terms of assembly, interacts with DDX4, PIWIL1, RANBP9 and TDRD1.

It localises to the cytoplasm. Functionally, plays a central role during spermatogenesis by repressing transposable elements and preventing their mobilization, which is essential for the germline integrity. Acts via the piRNA metabolic process, which mediates the repression of transposable elements during meiosis by forming complexes composed of piRNAs and Piwi proteins and governs the methylation and subsequent repression of transposons. Its association with pi-bodies suggests a participation in the primary piRNAs metabolic process. Required prior to the pachytene stage to facilitate the production of multiple types of piRNAs, including those associated with repeats involved in the regulation of retrotransposons. May act by mediating protein-protein interactions during germ cell maturation. This is Ankyrin repeat, SAM and basic leucine zipper domain-containing protein 1 (ASZ1) from Callithrix jacchus (White-tufted-ear marmoset).